A 334-amino-acid polypeptide reads, in one-letter code: Protein-methionine-sulfoxide reductase catalytic subunit MsrP (334 aa).

The segment at residues 1-44 is a signal peptide (tat-type signal); it reads MKKNQFLKESDVTAESVFFMKRRQVLKALGISAAALSLPHAAHA. Mo-molybdopterin-binding positions include asparagine 88, 91–92, cysteine 146, threonine 181, asparagine 233, arginine 238, and 249–251; these read YE and GIK.

This sequence belongs to the MsrP family. As to quaternary structure, heterodimer of a catalytic subunit (MsrP) and a heme-binding subunit (MsrQ). It depends on Mo-molybdopterin as a cofactor. In terms of processing, predicted to be exported by the Tat system. The position of the signal peptide cleavage has not been experimentally proven.

It is found in the periplasm. It catalyses the reaction L-methionyl-[protein] + a quinone + H2O = L-methionyl-(S)-S-oxide-[protein] + a quinol. The catalysed reaction is L-methionyl-[protein] + a quinone + H2O = L-methionyl-(R)-S-oxide-[protein] + a quinol. Functionally, part of the MsrPQ system that repairs oxidized periplasmic proteins containing methionine sulfoxide residues (Met-O), using respiratory chain electrons. Thus protects these proteins from oxidative-stress damage caused by reactive species of oxygen and chlorine generated by the host defense mechanisms. MsrPQ is essential for the maintenance of envelope integrity under bleach stress, rescuing a wide series of structurally unrelated periplasmic proteins from methionine oxidation, including the primary periplasmic chaperone SurA and the lipoprotein Pal. The catalytic subunit MsrP is non-stereospecific, being able to reduce both (R-) and (S-) diastereoisomers of methionine sulfoxide. The sequence is that of Protein-methionine-sulfoxide reductase catalytic subunit MsrP from Escherichia coli (strain UTI89 / UPEC).